Here is a 349-residue protein sequence, read N- to C-terminus: Mitochondrial carrier protein SCaMC-3L (349 aa).

Transmembrane regions (helical) follow at residues 88–104, 149–168, 188–205, and 243–261; these read GALW…GAVS, GNGI…FSVF, LLAG…INPM, and YLPN…LAVY. 2 Solcar repeats span residues 88–174 and 182–267; these read GALW…CKNY and PPFQ…LNCL.

It belongs to the mitochondrial carrier (TC 2.A.29) family.

It is found in the mitochondrion inner membrane. The enzyme catalyses Mg(2+)(out) + phosphate(in) + ATP(out) = Mg(2+)(in) + phosphate(out) + ATP(in). The catalysed reaction is ADP(out) + phosphate(in) + H(+)(out) = ADP(in) + phosphate(out) + H(+)(in). Calcium-independent ATP-Mg/Pi exchanger that catalyzes the electroneutral exchange of Mg-ATP or free ADP against an hydrogenphosphate and participates in the net transport of adenine nucleotides across the mitochondria inner membrane. This is Mitochondrial carrier protein SCaMC-3L from Bos taurus (Bovine).